A 206-amino-acid polypeptide reads, in one-letter code: Small ribosomal subunit protein uS4 (206 aa).

An S4 RNA-binding domain is found at 96-156; sequence GRLDNVVYRM…EKAKKQARIK (61 aa).

Belongs to the universal ribosomal protein uS4 family. Part of the 30S ribosomal subunit. Contacts protein S5. The interaction surface between S4 and S5 is involved in control of translational fidelity.

One of the primary rRNA binding proteins, it binds directly to 16S rRNA where it nucleates assembly of the body of the 30S subunit. Functionally, with S5 and S12 plays an important role in translational accuracy. The protein is Small ribosomal subunit protein uS4 of Tolumonas auensis (strain DSM 9187 / NBRC 110442 / TA 4).